The primary structure comprises 95 residues: Small ribosomal subunit protein bS18 (95 aa).

It belongs to the bacterial ribosomal protein bS18 family. Part of the 30S ribosomal subunit. Forms a tight heterodimer with protein bS6.

Binds as a heterodimer with protein bS6 to the central domain of the 16S rRNA, where it helps stabilize the platform of the 30S subunit. The polypeptide is Small ribosomal subunit protein bS18 (Rickettsia rickettsii (strain Sheila Smith)).